The primary structure comprises 154 residues: Protein X (154 aa).

A mitochondrial targeting sequence region spans residues 68–117 (PCALRFTSARRMETTVNAHQILPKVLHKRTLGLSAMSTTDLEAYFKACLF).

The protein belongs to the orthohepadnavirus protein X family. As to quaternary structure, may form homodimer. May interact with host CEBPA, CFLAR, CREB1, DDB1, E4F1, HBXIP, HSPD1/HSP60, NFKBIA, POLR2E and SMAD4. Interacts with host SMC5-SMC6 complex and induces its degradation. Interacts with host TRPC4AP; leading to prevent ubiquitination of TRPC4AP. Interacts with host PLSCR1; this interaction promotes ubiquitination and degradation of HBx and impairs HBx-mediated cell proliferation. A fraction may be phosphorylated in insect cells and HepG2 cells, a human hepatoblastoma cell line. Phosphorylated in vitro by host protein kinase C or mitogen-activated protein kinase. N-acetylated in insect cells.

It is found in the host cytoplasm. It localises to the host nucleus. The protein localises to the host mitochondrion. Its function is as follows. Multifunctional protein that plays a role in silencing host antiviral defenses and promoting viral transcription. Does not seem to be essential for HBV infection. May be directly involved in development of cirrhosis and liver cancer (hepatocellular carcinoma). Most of cytosolic activities involve modulation of cytosolic calcium. The effect on apoptosis is controversial depending on the cell types in which the studies have been conducted. May induce apoptosis by localizing in mitochondria and causing loss of mitochondrial membrane potential. May also modulate apoptosis by binding host CFLAR, a key regulator of the death-inducing signaling complex (DISC). Promotes viral transcription by using the host E3 ubiquitin ligase DDB1 to target the SMC5-SMC6 complex to proteasomal degradation. This host complex would otherwise bind to viral episomal DNA, and prevents its transcription. Moderately stimulates transcription of many different viral and cellular transcription elements. Promoters and enhancers stimulated by HBx contain DNA binding sites for NF-kappa-B, AP-1, AP-2, c-EBP, ATF/CREB, or the calcium-activated factor NF-AT. This is Protein X from Hepatitis B virus genotype E (isolate Cote d'Ivoire/ABI-129/2003) (HBV-E).